The chain runs to 689 residues: Polyribonucleotide nucleotidyltransferase (689 aa).

Positions 482 and 488 each coordinate Mg(2+). A KH domain is found at 549–608 (PRMITLTIPQNKIGELIGPGGKNIRKIQEDNNVKIDIEETGRVFISGVESDGVKSAKEYV). Residues 618 to 686 (GKIYKSRVTK…KQGRINLSIK (69 aa)) form the S1 motif domain.

It belongs to the polyribonucleotide nucleotidyltransferase family. It depends on Mg(2+) as a cofactor.

Its subcellular location is the cytoplasm. The catalysed reaction is RNA(n+1) + phosphate = RNA(n) + a ribonucleoside 5'-diphosphate. Involved in mRNA degradation. Catalyzes the phosphorolysis of single-stranded polyribonucleotides processively in the 3'- to 5'-direction. The chain is Polyribonucleotide nucleotidyltransferase from Endomicrobium trichonymphae.